A 355-amino-acid chain; its full sequence is Uroporphyrinogen decarboxylase (355 aa).

Substrate contacts are provided by residues 27–31 (RQAGR), Asp77, Tyr154, Thr209, and His327.

The protein belongs to the uroporphyrinogen decarboxylase family. In terms of assembly, homodimer.

The protein localises to the cytoplasm. The enzyme catalyses uroporphyrinogen III + 4 H(+) = coproporphyrinogen III + 4 CO2. It functions in the pathway porphyrin-containing compound metabolism; protoporphyrin-IX biosynthesis; coproporphyrinogen-III from 5-aminolevulinate: step 4/4. Its function is as follows. Catalyzes the decarboxylation of four acetate groups of uroporphyrinogen-III to yield coproporphyrinogen-III. The chain is Uroporphyrinogen decarboxylase from Yersinia pseudotuberculosis serotype O:1b (strain IP 31758).